The chain runs to 1146 residues: Cell division cycle and apoptosis regulator protein 1 (1146 aa).

The segment at 1 to 246 is interaction with AR; that stretch reads MAQFGGQKNP…AQPQPQSLLQ (246 aa). The segment at 200-657 is interaction with GATA2; that stretch reads QRIQTLPNQN…RALSSKGLKS (458 aa). The interval 282–351 is disordered; it reads IVSQPQPARR…RRERERSPRR (70 aa). 2 stretches are compositionally biased toward basic and acidic residues: residues 290–331 and 338–349; these read RRLD…ERSP and ERSPRRERERSP. Phosphoserine is present on serine 453. Residues 591 to 615 are a coiled coil; the sequence is KQQLVEKLQGERKKADGEQDEEEKD. The disordered stretch occupies residues 599–635; sequence QGERKKADGEQDEEEKDDGEVKEIATPTHWSKLDPKA. A compositionally biased stretch (acidic residues) spans 608 to 618; the sequence is EQDEEEKDDGE. A Phosphothreonine modification is found at threonine 624. Residues 633–667 form the SAP domain; it reads PKAMKVNDLRKELESRALSSKGLKSQLIARLTKQL. A Glycyl lysine isopeptide (Lys-Gly) (interchain with G-Cter in ubiquitin) cross-link involves residue lysine 634. An interaction with GATA1 region spans residues 640–1146; sequence DLRKELESRA…EKSKENGSGV (507 aa). Threonine 664 is subject to Phosphothreonine. 4 stretches are compositionally biased toward basic and acidic residues: residues 671–684, 691–716, 793–814, and 829–852; these read EQKEEQKELEKSEK, DKKSEDDKEEEERKRQEEVERQRQER, KEDKKDKEKKSKKEERKDKKEE, and SGDDKDKKEDRDERKKEEKRKDDS. Disordered regions lie at residues 671 to 716 and 793 to 912; these read EQKE…RQER and KEDK…KEKP. Phosphoserine is present on residues serine 682 and serine 694. A compositionally biased stretch (acidic residues) spans 853 to 884; it reads KDDDETEEDNNQDEYDPMEAEEAEDEDDDREE. Position 858 is a phosphothreonine (threonine 858). Residues 885–912 show a composition bias toward basic and acidic residues; the sequence is EEVKRDDKRDVSRYCKDRPAKDKEKEKP. Lysine 1008 participates in a covalent cross-link: Glycyl lysine isopeptide (Lys-Gly) (interchain with G-Cter in SUMO1); alternate. Lysine 1008 is covalently cross-linked (Glycyl lysine isopeptide (Lys-Gly) (interchain with G-Cter in SUMO2); alternate). A coiled-coil region spans residues 1029–1110; it reads DVGSLLQKLE…LQFENQLNKT (82 aa). Residues lysine 1063 and lysine 1131 each participate in a glycyl lysine isopeptide (Lys-Gly) (interchain with G-Cter in SUMO2) cross-link.

Directly interacts with ESR1, NR3C1 and p53/TP53. Interacts (via N-terminus) with CALCOCO1. Interacts with MED1 and GATA1. Interacts with AR and GATA2.

The protein resides in the cytoplasm. The protein localises to the perinuclear region. In terms of biological role, associates with components of the Mediator and p160 coactivator complexes that play a role as intermediaries transducing regulatory signals from upstream transcriptional activator proteins to basal transcription machinery at the core promoter. Recruited to endogenous nuclear receptor target genes in response to the appropriate hormone. Also functions as a p53 coactivator. May thus play an important role in transcriptional regulation. May be involved in apoptosis signaling in the presence of the retinoid CD437. Apoptosis induction involves sequestration of 14-3-3 protein(s) and mediated altered expression of multiple cell cycle regulatory genes including MYC, CCNB1 and CDKN1A. Plays a role in cell cycle progression and/or cell proliferation. In association with CALCOCO1 enhances GATA1- and MED1-mediated transcriptional activation from the gamma-globin promoter during erythroid differentiation of K562 erythroleukemia cells. Can act as a both a coactivator and corepressor of AR-mediated transcription. Contributes to chromatin looping and AR transcription complex assembly by stabilizing AR-GATA2 association on chromatin and facilitating MED1 and RNA polymerase II recruitment to AR-binding sites. May play an important role in the growth and tumorigenesis of prostate cancer cells. The chain is Cell division cycle and apoptosis regulator protein 1 (Ccar1) from Mus musculus (Mouse).